Here is a 489-residue protein sequence, read N- to C-terminus: Aerolysin (489 aa).

Positions 1 to 24 (MMNRIITANLANLASSLMLAQVLG) are cleaved as a signal peptide. 2 cysteine pairs are disulfide-bonded: cysteine 44/cysteine 100 and cysteine 184/cysteine 189. The segment at 70–86 (WQITGLADRWVIMGPGY) is interaction with host N-linked glycan. A part of the transmembrane beta-barrel after proteolytic activation of the toxin and insertion into the host membrane region spans residues 257–289 (YSLSEKVTTKNKFQWPLVGETELAIEIAASQSW). Positions 347-356 (RWGGNAWYTH) are interaction with glycans from host GPI-anchor. Residues 445 to 489 (TRSAKAAQLRSASAEEVALTSVDLDSEALANEGFGNVSLTIVPVQ) constitute a propeptide that is removed on maturation.

This sequence belongs to the aerolysin family. In terms of assembly, homodimer in solution; homoheptamer in the host membrane. After binding to GPI-anchored proteins in target membranes and proteolytic removal of the C-terminal propeptide, the protein assembles into a heptameric pre-pore complex. A further conformation change leads to insertion into the host membrane. In terms of processing, proteolytic cleavage and subsequent release of the propeptide trigger a major conformation change, leading to the formation of a heptameric pre-pore that then inserts into the host membrane.

The protein localises to the secreted. It is found in the host cell membrane. Secreted, cytolytic toxin that forms pores in host membranes after proteolytic removal of a C-terminal propeptide, leading to destruction of the membrane permeability barrier and cell death. The pores are formed by transmembrane beta-strands and are approximately 3 nm in diameter. This is Aerolysin (ash3) from Aeromonas salmonicida.